Here is a 366-residue protein sequence, read N- to C-terminus: Homer protein homolog 1 (366 aa).

Position 2 is an N-acetylglycine (Gly2). One can recognise a WH1 domain in the interval 2-110; that stretch reads GEQPIFSTRA…EKFQEFKEAA (109 aa). The disordered stretch occupies residues 114-189; sequence KEKSQEKMEL…RTQALSHASS (76 aa). Polar residues-rich tracts occupy residues 138–147 and 155–170; these read SPLTPESING and DVTQNSEPRAEPTQNA. The stretch at 193 to 364 forms a coiled coil; it reads KHWEAELATL…LRDNLAKLLE (172 aa). Positions 302–366 are required for tetramerization; it reads KLQEVEIRNK…DNLAKLLECS (65 aa). Ser318 carries the phosphoserine modification.

Belongs to the Homer family. As to quaternary structure, tetramer; this tetrameric structure is critical for forming the high-order complex with SHANK1, which in turn is necessary for the structural and functional integrity of dendritic spines. Isoform 1, isoform 2 and isoform 3 encode a coiled-coil structure that mediates homo- and heteromultimerization. Interacts with GRM1, GRM5, ITPR1, DNM3, RYR1, RYR2 and SHANK3. Interacts with IFT57 and OPHN1. Interacts with SHANK1; forms high-order polymerized complex with a mesh-like network structure, at least composed of SHANK1, HOMER1 and DLGAP1; the complex formation is SHANK1 multimerization dependent. Interacts with NFATC4. Interacts with DAGLA (via PPXXF motif); this interaction is required for the cell membrane localization of DAGLA. Interacts with SRGAP2. Expressed in skeletal muscle at the level of the Z line, in the forebrain and cerebellum. In terms of tissue distribution, expressed in cardiac and skeletal muscle. As to expression, expressed in the hippocampus. Expressed in skeletal muscle at the level of the Z line, in the heart, forebrain and cerebellum.

It localises to the cytoplasm. The protein localises to the postsynaptic density. It is found in the synapse. The protein resides in the cell projection. Its subcellular location is the dendritic spine. Its function is as follows. Postsynaptic density scaffolding protein. Binds and cross-links cytoplasmic regions of GRM1, GRM5, ITPR1, DNM3, RYR1, RYR2, SHANK1 and SHANK3. By physically linking GRM1 and GRM5 with ER-associated ITPR1 receptors, it aids the coupling of surface receptors to intracellular calcium release. May also couple GRM1 to PI3 kinase through its interaction with AGAP2. Isoform 1 regulates the trafficking and surface expression of GRM5. Differentially regulates the functions of the calcium activated channel ryanodine receptors RYR1 and RYR2. Isoform 1 decreases the activity of RYR2, and increases the activity of RYR1, whereas isoform 5 counteracts the effects by competing for binding sites. Isoform 3 regulates the trafficking and surface expression of GRM5. Isoform 5 acts as a natural dominant negative, in dynamic competition with constitutively expressed isoform 1, isoform 2 and isoform 3 to regulate synaptic metabotropic glutamate function. Isoform 5, may be involved in the structural changes that occur at synapses during long-lasting neuronal plasticity and development. Forms a high-order complex with SHANK1, which in turn is necessary for the structural and functional integrity of dendritic spines. Negatively regulates T cell activation by inhibiting the calcineurin-NFAT pathway. Acts by competing with calcineurin/PPP3CA for NFAT protein binding, hence preventing NFAT activation by PPP3CA. In Mus musculus (Mouse), this protein is Homer protein homolog 1.